Here is a 191-residue protein sequence, read N- to C-terminus: Small ribosomal subunit protein uS7 (191 aa).

Belongs to the universal ribosomal protein uS7 family. In terms of assembly, part of the 30S ribosomal subunit.

Its function is as follows. One of the primary rRNA binding proteins, it binds directly to 16S rRNA where it nucleates assembly of the head domain of the 30S subunit. Is located at the subunit interface close to the decoding center. The polypeptide is Small ribosomal subunit protein uS7 (Methanocaldococcus jannaschii (strain ATCC 43067 / DSM 2661 / JAL-1 / JCM 10045 / NBRC 100440) (Methanococcus jannaschii)).